Consider the following 324-residue polypeptide: tRNA dimethylallyltransferase (324 aa).

Residue 17–24 (GPTASGKT) participates in ATP binding. A substrate-binding site is contributed by 19-24 (TASGKT). Interaction with substrate tRNA regions lie at residues 42-45 (DSAL), 166-170 (QRIQR), 251-256 (RCVGYR), and 284-291 (KRQITWLR).

Belongs to the IPP transferase family. Monomer. It depends on Mg(2+) as a cofactor.

The enzyme catalyses adenosine(37) in tRNA + dimethylallyl diphosphate = N(6)-dimethylallyladenosine(37) in tRNA + diphosphate. Its function is as follows. Catalyzes the transfer of a dimethylallyl group onto the adenine at position 37 in tRNAs that read codons beginning with uridine, leading to the formation of N6-(dimethylallyl)adenosine (i(6)A). This Burkholderia orbicola (strain MC0-3) protein is tRNA dimethylallyltransferase.